We begin with the raw amino-acid sequence, 239 residues long: Pyridoxine 5'-phosphate synthase (239 aa).

Residue asparagine 7 coordinates 3-amino-2-oxopropyl phosphate. Residue 9-10 (DH) coordinates 1-deoxy-D-xylulose 5-phosphate. Residue arginine 18 coordinates 3-amino-2-oxopropyl phosphate. Catalysis depends on histidine 43, which acts as the Proton acceptor. 1-deoxy-D-xylulose 5-phosphate-binding residues include arginine 45 and histidine 50. The active-site Proton acceptor is the glutamate 70. Residue threonine 100 coordinates 1-deoxy-D-xylulose 5-phosphate. Residue histidine 191 is the Proton donor of the active site. 3-amino-2-oxopropyl phosphate-binding positions include glycine 192 and 213-214 (GH).

Belongs to the PNP synthase family. Homooctamer; tetramer of dimers.

It localises to the cytoplasm. It catalyses the reaction 3-amino-2-oxopropyl phosphate + 1-deoxy-D-xylulose 5-phosphate = pyridoxine 5'-phosphate + phosphate + 2 H2O + H(+). It participates in cofactor biosynthesis; pyridoxine 5'-phosphate biosynthesis; pyridoxine 5'-phosphate from D-erythrose 4-phosphate: step 5/5. In terms of biological role, catalyzes the complicated ring closure reaction between the two acyclic compounds 1-deoxy-D-xylulose-5-phosphate (DXP) and 3-amino-2-oxopropyl phosphate (1-amino-acetone-3-phosphate or AAP) to form pyridoxine 5'-phosphate (PNP) and inorganic phosphate. The chain is Pyridoxine 5'-phosphate synthase from Citrifermentans bemidjiense (strain ATCC BAA-1014 / DSM 16622 / JCM 12645 / Bem) (Geobacter bemidjiensis).